We begin with the raw amino-acid sequence, 276 residues long: MDRVTVSSLKEMKEAGQKIAMITAYDYPSALFAEEAGAEVLLVGDSLGMVVLGYDSTVPVTMEEMLHHVKAVVRGSKRSMVVADMPFMSYQASYTDALYNAGRFLKEGGAQAVKLEGGGEIAELVAKLVTAGIPVMGHIGLTPQSVNALGGYKVQGKDLKTAQKLLDDAKALADAGAFAIVLECVPAALAAKITESIPIPTIGIGSGVNCDGQVLVYHDVLGMYPRMLPKFVKRYADLSSLIKEAIRQYVQEVKEQQFPEEKHSFTMAPEILERIY.

Mg(2+)-binding residues include Asp45 and Asp84. 3-methyl-2-oxobutanoate-binding positions include 45–46 (DS), Asp84, and Lys114. Residue Glu116 participates in Mg(2+) binding. The active-site Proton acceptor is Glu183.

This sequence belongs to the PanB family. Homodecamer; pentamer of dimers. The cofactor is Mg(2+).

It is found in the cytoplasm. The enzyme catalyses 3-methyl-2-oxobutanoate + (6R)-5,10-methylene-5,6,7,8-tetrahydrofolate + H2O = 2-dehydropantoate + (6S)-5,6,7,8-tetrahydrofolate. Its pathway is cofactor biosynthesis; (R)-pantothenate biosynthesis; (R)-pantoate from 3-methyl-2-oxobutanoate: step 1/2. In terms of biological role, catalyzes the reversible reaction in which hydroxymethyl group from 5,10-methylenetetrahydrofolate is transferred onto alpha-ketoisovalerate to form ketopantoate. The protein is 3-methyl-2-oxobutanoate hydroxymethyltransferase of Carboxydothermus hydrogenoformans (strain ATCC BAA-161 / DSM 6008 / Z-2901).